A 194-amino-acid polypeptide reads, in one-letter code: uncharacterized protein (194 aa).

CBS domains lie at Met13–Val72 and Met78–Ile133. The 34-residue stretch at Tyr159 to Lys192 folds into the ACP-type MB domain. 4 residues coordinate Fe cation: Cys164, Cys167, Cys182, and Cys185. The Zn(2+) site is built by Cys164, Cys167, Cys182, and Cys185.

This is an uncharacterized protein from Methanocaldococcus jannaschii (strain ATCC 43067 / DSM 2661 / JAL-1 / JCM 10045 / NBRC 100440) (Methanococcus jannaschii).